A 208-amino-acid chain; its full sequence is Protein-L-isoaspartate O-methyltransferase (208 aa).

Residue Ser59 is part of the active site.

Belongs to the methyltransferase superfamily. L-isoaspartyl/D-aspartyl protein methyltransferase family.

The protein resides in the cytoplasm. The catalysed reaction is [protein]-L-isoaspartate + S-adenosyl-L-methionine = [protein]-L-isoaspartate alpha-methyl ester + S-adenosyl-L-homocysteine. In terms of biological role, catalyzes the methyl esterification of L-isoaspartyl residues in peptides and proteins that result from spontaneous decomposition of normal L-aspartyl and L-asparaginyl residues. It plays a role in the repair and/or degradation of damaged proteins. The polypeptide is Protein-L-isoaspartate O-methyltransferase (Serratia proteamaculans (strain 568)).